The primary structure comprises 355 residues: UDP-N-acetylglucosamine--N-acetylmuramyl-(pentapeptide) pyrophosphoryl-undecaprenol N-acetylglucosamine transferase (355 aa).

Residues 15 to 17 (TGG), asparagine 127, arginine 163, serine 191, isoleucine 244, 263 to 268 (ALTVSE), and glutamine 288 each bind UDP-N-acetyl-alpha-D-glucosamine.

This sequence belongs to the glycosyltransferase 28 family. MurG subfamily.

It is found in the cell inner membrane. It catalyses the reaction di-trans,octa-cis-undecaprenyl diphospho-N-acetyl-alpha-D-muramoyl-L-alanyl-D-glutamyl-meso-2,6-diaminopimeloyl-D-alanyl-D-alanine + UDP-N-acetyl-alpha-D-glucosamine = di-trans,octa-cis-undecaprenyl diphospho-[N-acetyl-alpha-D-glucosaminyl-(1-&gt;4)]-N-acetyl-alpha-D-muramoyl-L-alanyl-D-glutamyl-meso-2,6-diaminopimeloyl-D-alanyl-D-alanine + UDP + H(+). Its pathway is cell wall biogenesis; peptidoglycan biosynthesis. Cell wall formation. Catalyzes the transfer of a GlcNAc subunit on undecaprenyl-pyrophosphoryl-MurNAc-pentapeptide (lipid intermediate I) to form undecaprenyl-pyrophosphoryl-MurNAc-(pentapeptide)GlcNAc (lipid intermediate II). The sequence is that of UDP-N-acetylglucosamine--N-acetylmuramyl-(pentapeptide) pyrophosphoryl-undecaprenol N-acetylglucosamine transferase from Salmonella dublin (strain CT_02021853).